The sequence spans 430 residues: Histidine--tRNA ligase (430 aa).

The protein belongs to the class-II aminoacyl-tRNA synthetase family. Homodimer.

The protein localises to the cytoplasm. The catalysed reaction is tRNA(His) + L-histidine + ATP = L-histidyl-tRNA(His) + AMP + diphosphate + H(+). This chain is Histidine--tRNA ligase, found in Lactococcus lactis subsp. lactis (strain IL1403) (Streptococcus lactis).